Here is a 239-residue protein sequence, read N- to C-terminus: Chaperone protein PapD (239 aa).

A signal peptide spans Met1–Ala21. A disulfide bridge links Cys228 with Cys233.

Belongs to the periplasmic pilus chaperone family. As to quaternary structure, interacts with substrates PapG and PapK.

The protein localises to the periplasm. Binds and caps interactive surfaces on P pilus subunits to prevent them from participating in non-productive interactions. Facilitates the import of P pilus subunits into the periplasm, probably also facilitates their folding. Chaperone-subunit complexes are then targeted to the PapC outer membrane usher where the chaperone must uncap from the subunits. Coexpression of this chaperone with individual, otherwise toxic, P pilus subunits (tested with PapA, PapE and PapG) suppresses their growth inhibitory phenotype. This Escherichia coli protein is Chaperone protein PapD (papD).